The following is a 236-amino-acid chain: Putative (5-formylfuran-3-yl)methyl phosphate synthase (236 aa).

K38 functions as the Schiff-base intermediate with substrate in the catalytic mechanism. K94 acts as the Proton acceptor in catalysis.

It belongs to the MfnB family.

The enzyme catalyses 2 D-glyceraldehyde 3-phosphate = 4-(hydroxymethyl)-2-furancarboxaldehyde phosphate + phosphate + 2 H2O. Functionally, catalyzes the formation of 4-(hydroxymethyl)-2-furancarboxaldehyde phosphate (4-HFC-P) from two molecules of glyceraldehyde-3-P (GA-3-P). This is Putative (5-formylfuran-3-yl)methyl phosphate synthase from Methylorubrum extorquens (Methylobacterium dichloromethanicum).